A 226-amino-acid chain; its full sequence is Brachyurin (226 aa).

Positions isoleucine 1–glycine 223 constitute a Peptidase S1 domain. Cysteines 26 and 42 form a disulfide. Active-site charge relay system residues include histidine 41 and aspartate 87. Intrachain disulfides connect cysteine 151-cysteine 164 and cysteine 174-cysteine 200. Serine 178 acts as the Charge relay system in catalysis.

It belongs to the peptidase S1 family.

The catalysed reaction is Hydrolysis of proteins, with broad specificity for peptide bonds. Native collagen is cleaved about 75% of the length of the molecule from the N-terminus. Low activity on small molecule substrates of both trypsin and chymotrypsin.. This enzyme is a serine protease capable of degrading the native triple helix of collagen. This is Brachyurin from Leptuca pugilator (Atlantic sand fiddler crab).